Consider the following 337-residue polypeptide: Homeobox protein knotted-1-like 4 (337 aa).

Disordered regions lie at residues 1–56 (MEQQ…SFHE) and 159–190 (FTLDDNGSEGGNSSEDEQEAGGGDMASAGLPE). Low complexity predominate over residues 27–38 (PTSTSTSPAVPS). The region spanning 200–220 (ELKSHLLNKYSGYLSSLWREL) is the ELK domain. Positions 221-284 (SKKKKKGKLP…NQRKRHWKPT (64 aa)) form a DNA-binding region, homeobox; TALE-type.

Belongs to the TALE/KNOX homeobox family.

The protein localises to the nucleus. This Oryza sativa subsp. japonica (Rice) protein is Homeobox protein knotted-1-like 4 (OSH10).